The sequence spans 975 residues: Translation initiation factor IF-2 (975 aa).

Disordered regions lie at residues 49–110 (KLSG…APKA) and 193–339 (AAAP…GRGA). Positions 63-72 (KKTAARKAAP) are enriched in basic residues. Composition is skewed to low complexity over residues 73-94 (KKAA…AKTP), 193-202 (AAAPEAPAPQ), and 209-225 (VVGT…ASAP). A compositionally biased stretch (basic and acidic residues) spans 308 to 318 (GADRGGRDFDK). Residues 324-336 (GPSAPAAGPAAAG) are compositionally biased toward low complexity. The 171-residue stretch at 469-639 (TRPPVVTVMG…KLVAEVAELK (171 aa)) folds into the tr-type G domain. A G1 region spans residues 478–485 (GHVDHGKT). Residue 478–485 (GHVDHGKT) coordinates GTP. A G2 region spans residues 503–507 (GITQH). The G3 stretch occupies residues 525 to 528 (DTPG). GTP contacts are provided by residues 525–529 (DTPGH) and 579–582 (NKID). The interval 579–582 (NKID) is G4. Residues 615–617 (SAL) are G5.

The protein belongs to the TRAFAC class translation factor GTPase superfamily. Classic translation factor GTPase family. IF-2 subfamily.

The protein localises to the cytoplasm. In terms of biological role, one of the essential components for the initiation of protein synthesis. Protects formylmethionyl-tRNA from spontaneous hydrolysis and promotes its binding to the 30S ribosomal subunits. Also involved in the hydrolysis of GTP during the formation of the 70S ribosomal complex. This chain is Translation initiation factor IF-2, found in Bdellovibrio bacteriovorus (strain ATCC 15356 / DSM 50701 / NCIMB 9529 / HD100).